A 30-amino-acid polypeptide reads, in one-letter code: Cysteine-rich venom protein annuliferin-a (30 aa).

Belongs to the CRISP family. In terms of processing, contains 8 disulfide bonds. In terms of tissue distribution, expressed by the venom gland.

It localises to the secreted. Its function is as follows. Inhibits calcium-activated potassium channels (KCa), voltage-gated potassium channel (Kv), and the calcium release channel/ryanodine receptor (RyR). This Naja annulifera (Banded Egyptian cobra) protein is Cysteine-rich venom protein annuliferin-a.